The primary structure comprises 309 residues: Cilia-and flagella-associated protein 96 (309 aa).

The interval 220–249 is disordered; that stretch reads EEKKKTISNTFKPSSPGKKPGGMKAGTFDP.

Belongs to the CFAP96 family. In terms of tissue distribution, detected in testis and fetal liver.

The protein resides in the cytoplasm. The protein localises to the cytoskeleton. It localises to the microtubule organizing center. Its subcellular location is the centrosome. This chain is Cilia-and flagella-associated protein 96, found in Homo sapiens (Human).